The sequence spans 436 residues: Protein translocase subunit SecY (436 aa).

A run of 10 helical transmembrane segments spans residues 19 to 39 (ILFT…TVPG), 68 to 88 (FSVF…VQLL), 116 to 136 (YISL…FNAL), 151 to 171 (LFIG…GEQI), 179 to 199 (GVSM…VKGI), 216 to 236 (IIFV…TTYV), 269 to 289 (VIPV…LQFL), 313 to 333 (GIAM…FVQI), 372 to 392 (VGSL…DLFG), and 395 to 415 (DTVA…IEGM).

Belongs to the SecY/SEC61-alpha family. In terms of assembly, component of the Sec protein translocase complex. Heterotrimer consisting of SecY, SecE and SecG subunits. The heterotrimers can form oligomers, although 1 heterotrimer is thought to be able to translocate proteins. Interacts with the ribosome. Interacts with SecDF, and other proteins may be involved. Interacts with SecA.

Its subcellular location is the cell membrane. Functionally, the central subunit of the protein translocation channel SecYEG. Consists of two halves formed by TMs 1-5 and 6-10. These two domains form a lateral gate at the front which open onto the bilayer between TMs 2 and 7, and are clamped together by SecE at the back. The channel is closed by both a pore ring composed of hydrophobic SecY resides and a short helix (helix 2A) on the extracellular side of the membrane which forms a plug. The plug probably moves laterally to allow the channel to open. The ring and the pore may move independently. This is Protein translocase subunit SecY from Streptococcus gordonii (strain Challis / ATCC 35105 / BCRC 15272 / CH1 / DL1 / V288).